The chain runs to 164 residues: MNFLDESFWLAVSFIIFVYLIYRPAKKAILNSLDAKILEVQEKVLKAEKLKEDAALLFEQTNAQIQKLETLRSQMIEESNEVTKKIIQEKTKEIEEFLEHKKSDAIQLIQNQKSTATKELQDEFCDEVIKLVSEYFQSAKFSESNIAKNLMDKSDSSHNNDKST.

The chain crosses the membrane as a helical span at residues 7-25; sequence SFWLAVSFIIFVYLIYRPA.

Belongs to the ATPase B chain family. As to quaternary structure, F-type ATPases have 2 components, F(1) - the catalytic core - and F(0) - the membrane proton channel. F(1) has five subunits: alpha(3), beta(3), gamma(1), delta(1), epsilon(1). F(0) has three main subunits: a(1), b(2) and c(10-14). The alpha and beta chains form an alternating ring which encloses part of the gamma chain. F(1) is attached to F(0) by a central stalk formed by the gamma and epsilon chains, while a peripheral stalk is formed by the delta and b chains.

It is found in the cell inner membrane. Functionally, f(1)F(0) ATP synthase produces ATP from ADP in the presence of a proton or sodium gradient. F-type ATPases consist of two structural domains, F(1) containing the extramembraneous catalytic core and F(0) containing the membrane proton channel, linked together by a central stalk and a peripheral stalk. During catalysis, ATP synthesis in the catalytic domain of F(1) is coupled via a rotary mechanism of the central stalk subunits to proton translocation. In terms of biological role, component of the F(0) channel, it forms part of the peripheral stalk, linking F(1) to F(0). The sequence is that of ATP synthase subunit b from Rickettsia felis (strain ATCC VR-1525 / URRWXCal2) (Rickettsia azadi).